The sequence spans 148 residues: Cyanate hydratase (148 aa).

Active-site residues include R89, E92, and S115.

The protein belongs to the cyanase family.

It catalyses the reaction cyanate + hydrogencarbonate + 3 H(+) = NH4(+) + 2 CO2. Its function is as follows. Catalyzes the reaction of cyanate with bicarbonate to produce ammonia and carbon dioxide. In Sulfurisphaera tokodaii (strain DSM 16993 / JCM 10545 / NBRC 100140 / 7) (Sulfolobus tokodaii), this protein is Cyanate hydratase.